Here is a 617-residue protein sequence, read N- to C-terminus: Electron transfer flavoprotein-ubiquinone oxidoreductase, mitochondrial (617 aa).

The transit peptide at 1 to 33 (MQVLLARLACPVYQCFHAIKIKKNYLPLCATRW) directs the protein to the mitochondrion. 71-85 (VVIVGAGPAGLSAAA) is a binding site for FAD. Position 96 is an N6-acetyllysine (Lys-96). Residues 109-130 (IGAHTLSGACLDPRALQELFPD) lie within the membrane without spanning it. Residues Lys-132 and Lys-223 each carry the N6-acetyllysine modification. A ubiquinone-binding residues include Gly-305 and Gly-306. An N6-acetyllysine modification is found at Lys-357. The stretch at 428–447 (IGLDVTEYEDNLKKSWVWKE) is an intramembrane region. Residue Ser-551 is modified to Phosphoserine. [4Fe-4S] cluster-binding residues include Cys-561, Cys-586, Cys-589, and Cys-592. The region spanning 577-606 (FRLQINAQNCVHCKTCDIKDPSQNINWVVP) is the 4Fe-4S ferredoxin-type domain.

Belongs to the ETF-QO/FixC family. As to quaternary structure, monomer. Requires [4Fe-4S] cluster as cofactor. FAD is required as a cofactor.

Its subcellular location is the mitochondrion inner membrane. The enzyme catalyses a ubiquinone + reduced [electron-transfer flavoprotein] = a ubiquinol + oxidized [electron-transfer flavoprotein] + H(+). Accepts electrons from ETF and reduces ubiquinone. The chain is Electron transfer flavoprotein-ubiquinone oxidoreductase, mitochondrial (ETFDH) from Bos taurus (Bovine).